A 150-amino-acid polypeptide reads, in one-letter code: Large ribosomal subunit protein bL9 (150 aa).

It belongs to the bacterial ribosomal protein bL9 family.

In terms of biological role, binds to the 23S rRNA. This chain is Large ribosomal subunit protein bL9, found in Corynebacterium glutamicum (strain ATCC 13032 / DSM 20300 / JCM 1318 / BCRC 11384 / CCUG 27702 / LMG 3730 / NBRC 12168 / NCIMB 10025 / NRRL B-2784 / 534).